Here is an 84-residue protein sequence, read N- to C-terminus: Putative antitoxin VapB7 (84 aa).

In terms of biological role, antitoxin component of a possible type II toxin-antitoxin (TA) system. The cognate toxin is VapC7. This Mycobacterium tuberculosis (strain ATCC 25618 / H37Rv) protein is Putative antitoxin VapB7 (vapB7).